Consider the following 165-residue polypeptide: UPF0114 protein Ent638_3411 (165 aa).

A run of 3 helical transmembrane segments spans residues 15–35 (LLAP…IKFF), 53–73 (LILV…LVMV), and 136–156 (LMWY…MGYL).

The protein belongs to the UPF0114 family.

The protein localises to the cell membrane. This chain is UPF0114 protein Ent638_3411, found in Enterobacter sp. (strain 638).